A 250-amino-acid chain; its full sequence is LexA repressor (250 aa).

A compositionally biased stretch (basic and acidic residues) spans 1–21 (MTSQERGTRRGDTRGNVRDFP). The segment at 1–33 (MTSQERGTRRGDTRGNVRDFPDSPADASGLTQR) is disordered. Residues 54–74 (VREIGEAVGLTSTSSVAHQLK) constitute a DNA-binding region (H-T-H motif). Active-site for autocatalytic cleavage activity residues include Ser-174 and Lys-211.

Belongs to the peptidase S24 family. In terms of assembly, homodimer.

It carries out the reaction Hydrolysis of Ala-|-Gly bond in repressor LexA.. Its function is as follows. Represses a number of genes involved in the response to DNA damage (SOS response), including recA and lexA. In the presence of single-stranded DNA, RecA interacts with LexA causing an autocatalytic cleavage which disrupts the DNA-binding part of LexA, leading to derepression of the SOS regulon and eventually DNA repair. The polypeptide is LexA repressor (Parafrankia sp. (strain EAN1pec)).